Here is a 180-residue protein sequence, read N- to C-terminus: Ribosome maturation factor RimM (180 aa).

One can recognise a PRC barrel domain in the interval 99-179 (NNEYYWKDIV…IVIKNWKQTF (81 aa)).

The protein belongs to the RimM family. Binds ribosomal protein uS19.

The protein resides in the cytoplasm. Functionally, an accessory protein needed during the final step in the assembly of 30S ribosomal subunit, possibly for assembly of the head region. Essential for efficient processing of 16S rRNA. May be needed both before and after RbfA during the maturation of 16S rRNA. It has affinity for free ribosomal 30S subunits but not for 70S ribosomes. This is Ribosome maturation factor RimM from Buchnera aphidicola subsp. Baizongia pistaciae (strain Bp).